The following is a 41-amino-acid chain: Photosystem I reaction center subunit IX (41 aa).

Residues 7 to 29 (YLSTAPVLLTVWLSITASGIMII) traverse the membrane as a helical segment.

It belongs to the PsaJ family.

The protein resides in the plastid. It localises to the chloroplast thylakoid membrane. Its function is as follows. May help in the organization of the PsaE and PsaF subunits. The polypeptide is Photosystem I reaction center subunit IX (Heterosigma akashiwo (strain NIES-293 / 8280G21-1)).